Here is a 487-residue protein sequence, read N- to C-terminus: Schwannomin-interacting protein 1 (487 aa).

4 disordered regions span residues 1 to 74 (MERS…VSAL), 88 to 221 (VIDE…PVPP), 236 to 260 (FREQ…NERE), and 308 to 354 (SGSD…SLDD). Positions 14-27 (DQGKHSDSDYREDG) are enriched in basic and acidic residues. A compositionally biased stretch (low complexity) spans 32-67 (SDAGSSSSSSRASSQSNSTKVTPCSECKSSSSPGGS). The span at 92–106 (WAPEEDGEEEEEEDE) shows a compositional bias: acidic residues. Composition is skewed to basic and acidic residues over residues 107–123 (RDQR…REPG) and 153–162 (HQHDPQDLRH). A Phosphoserine modification is found at Ser-117. Residues 242-255 (RNQGQARTNSTSAQ) are compositionally biased toward polar residues. Residues 309 to 323 (GSDKDSDADDSKTET) are compositionally biased toward basic and acidic residues. The span at 324–335 (SLDTPLSPMSKQ) shows a compositional bias: polar residues. Residues 344 to 354 (TTEEESESLDD) are compositionally biased toward acidic residues. Residues 424-458 (IGQLQVIVNDLHSQIESLNEELVQLLLIRDELHTE) adopt a coiled-coil conformation.

This sequence belongs to the SCHIP1 family. As to quaternary structure, homooligomer (via coiled coil domain). Interacts with NF2; the interaction is direct. Interacts with ANK3. Preferentially expressed in brain, skeletal muscles and heart. Also expressed in detected in pancreas, kidney, liver, lung, and placenta.

The protein localises to the cytoplasm. In Homo sapiens (Human), this protein is Schwannomin-interacting protein 1.